The sequence spans 96 residues: Putative regulatory protein Teth514_1762 (96 aa).

Belongs to the RemA family.

The protein is Putative regulatory protein Teth514_1762 of Thermoanaerobacter sp. (strain X514).